The primary structure comprises 264 residues: uncharacterized protein (264 aa).

Residues 57–264 (RPPASPCPPR…VYPHPHLTAT (208 aa)) form a disordered region. A compositionally biased stretch (basic residues) spans 140-153 (GKARRSPGRRRHPH). The segment covering 154-165 (SSFPQASSPSSP) has biased composition (low complexity).

This is an uncharacterized protein from Homo sapiens (Human).